A 208-amino-acid chain; its full sequence is Uracil phosphoribosyltransferase (208 aa).

5-phospho-alpha-D-ribose 1-diphosphate is bound by residues Arg78, Arg103, and 130-138; that span reads DPMLATGGS. Residues Ile193 and 198-200 contribute to the uracil site; that span reads GDA. Asp199 lines the 5-phospho-alpha-D-ribose 1-diphosphate pocket.

Belongs to the UPRTase family. Mg(2+) is required as a cofactor.

It catalyses the reaction UMP + diphosphate = 5-phospho-alpha-D-ribose 1-diphosphate + uracil. It participates in pyrimidine metabolism; UMP biosynthesis via salvage pathway; UMP from uracil: step 1/1. Allosterically activated by GTP. Catalyzes the conversion of uracil and 5-phospho-alpha-D-ribose 1-diphosphate (PRPP) to UMP and diphosphate. This chain is Uracil phosphoribosyltransferase, found in Aeromonas salmonicida (strain A449).